We begin with the raw amino-acid sequence, 34 residues long: Photosystem II reaction center protein Y (34 aa).

Residues 1-4 (MDIR) are Lumenal-facing. Residues 5–23 (LLIVLLPVLAAASWALYNI) traverse the membrane as a helical segment. At 24–34 (GRVALQQFRSM) the chain is on the stromal side.

Belongs to the PsbY family. PSII is composed of 1 copy each of membrane proteins PsbA, PsbB, PsbC, PsbD, PsbE, PsbF, PsbH, PsbI, PsbJ, PsbK, PsbL, PsbM, PsbT, PsbX, PsbY, PsbZ, Psb30/Ycf12, at least 3 peripheral proteins of the oxygen-evolving complex and a large number of cofactors. It forms dimeric complexes.

The protein localises to the plastid. Its subcellular location is the chloroplast thylakoid membrane. Its function is as follows. Loosely associated component of the core of photosystem II (PSII), it is not always seen in crystals. PSII is a light-driven water plastoquinone oxidoreductase, using light energy to abstract electrons from H(2)O, generating a proton gradient subsequently used for ATP formation. This Gracilaria tenuistipitata var. liui (Red alga) protein is Photosystem II reaction center protein Y.